A 969-amino-acid polypeptide reads, in one-letter code: Levansucrase (969 aa).

Positions 1–52 (MDITVNSQSNTVAPKQAECKKMRYSIRKVATVGATSALVGTLAFLGATQVKA) are cleaved as a signal peptide. The span at 89–103 (SEAVESSVAHSEVAT) shows a compositional bias: low complexity. The disordered stretch occupies residues 89–169 (SEAVESSVAH…STASSEAADT (81 aa)). Over residues 106–116 (VTETQPSNTTP) the composition is skewed to polar residues. Residues 124 to 166 (SSTVVTSSSDATTPSATVAAVSAPAHTSEAAVEAPTSTASSEA) are compositionally biased toward low complexity. Sucrose is bound by residues tryptophan 286, aspartate 287, and serine 356. The active-site Nucleophile is aspartate 287. Aspartate 443 lines the Ca(2+) pocket. Residues arginine 448 and aspartate 449 each contribute to the sucrose site. Ca(2+)-binding residues include glutamine 473, asparagine 512, and aspartate 544. Residue glutamate 545 participates in sucrose binding. Residue glutamate 547 is the Proton donor/acceptor of the active site. Arginine 565 contacts sucrose. 2 disordered regions span residues 746 to 843 (VKDG…VGDR) and 860 to 934 (IVAT…SEGS). Residues 747-758 (KDGKDKKADKPE) are compositionally biased toward basic and acidic residues. Over residues 776–789 (KPGTSKPADNNQPS) the composition is skewed to polar residues. The segment covering 872–910 (VKEESVTETEAPKPVKSEEKVQSHGVDKANEVTKSDESS) has biased composition (basic and acidic residues). Positions 924 to 934 (TPKTPSDSEGS) are enriched in polar residues. A helical membrane pass occupies residues 938–958 (ILSILATIFAAIASLALLGYG).

It belongs to the glycosyl hydrolase 68 family.

The protein localises to the cell membrane. The protein resides in the cell surface. It catalyses the reaction [6)-beta-D-fructofuranosyl-(2-&gt;](n) alpha-D-glucopyranoside + sucrose = [6)-beta-D-fructofuranosyl-(2-&gt;](n+1) alpha-D-glucopyranoside + D-glucose. Ca(2+) may play an important structural role and promote stability of levansucrase. Functionally, catalyzes the synthesis of levan, a fructose polymer, by transferring the fructosyl moiety from sucrose to a growing acceptor molecule. Also displays sucrose hydrolase activity. This is Levansucrase from Streptococcus salivarius.